A 399-amino-acid chain; its full sequence is Dual specificity mitogen-activated protein kinase kinase 4 (399 aa).

The segment at 1 to 40 (MAAPSPSGGGGSGGGSGSGTPGPVGSPAPGHPAVSSMQGK) is disordered. At alanine 2 the chain carries N-acetylalanine. The span at 7–22 (SGGGGSGGGSGSGTPG) shows a compositional bias: gly residues. A d domain region spans residues 37-52 (MQGKRKALKLNFANPP). At arginine 58 the chain carries Asymmetric dimethylarginine; alternate. Arginine 58 carries the omega-N-methylarginine; alternate modification. Position 90 is a phosphoserine (serine 90). Residues 102–367 (LKDLGEIGRG…YKELLKHPFI (266 aa)) form the Protein kinase domain. Residues 108–116 (IGRGAYGSV) and lysine 131 each bind ATP. Catalysis depends on aspartate 229, which acts as the Proton acceptor. Serine 257 carries the post-translational modification Phosphoserine; by MAP3K. Threonine 261 carries the post-translational modification Phosphothreonine; by MAP3K. The interval 364–387 (HPFILMYEERAVEVACYVCKILDQ) is DVD domain.

The protein belongs to the protein kinase superfamily. STE Ser/Thr protein kinase family. MAP kinase kinase subfamily. As to quaternary structure, interacts with SPAG9. Interacts (via its D domain) with its substrates MAPK8/JNK1, MAPK9/JNK2, MAPK10/JNK3, MAPK11 and MAPK14. Interacts (via its DVD domain) with MAP3Ks activators like MAP3K1/MEKK1 and MAP3K11/MLK3. Interacts with ARRB1, ARRB2 and MAPK8IP3/JIP3. In terms of processing, activated by phosphorylation on Ser-257 and Thr-261 by MAP kinase kinase kinases (MAP3Ks). In terms of tissue distribution, abundant expression is seen in the skeletal muscle. It is also widely expressed in other tissues.

The protein resides in the cytoplasm. It localises to the nucleus. It carries out the reaction L-seryl-[protein] + ATP = O-phospho-L-seryl-[protein] + ADP + H(+). It catalyses the reaction L-threonyl-[protein] + ATP = O-phospho-L-threonyl-[protein] + ADP + H(+). The catalysed reaction is L-tyrosyl-[protein] + ATP = O-phospho-L-tyrosyl-[protein] + ADP + H(+). Its activity is regulated as follows. Activated in response to a variety of cellular stresses, including UV and gamma-irradiation, heat shock, hyperosmolarity, T-cell receptor stimulation, peroxide and inflammatory cytokines. Also activated by developmental cues. MAP2K4/MKK4 is activated by the majority of MKKKs, such as MAP3K5/ASK1, MAP3K1/MEKK1, MAP3K7/TAK1, MAP3K10/MLK2, MAP3K11/MLK3, MAP3K12/DLK and MAP3K13/LZK. Its function is as follows. Dual specificity protein kinase which acts as an essential component of the MAP kinase signal transduction pathway. Essential component of the stress-activated protein kinase/c-Jun N-terminal kinase (SAP/JNK) signaling pathway. With MAP2K7/MKK7, is the one of the only known kinase to directly activate the stress-activated protein kinase/c-Jun N-terminal kinases MAPK8/JNK1, MAPK9/JNK2 and MAPK10/JNK3. MAP2K4/MKK4 and MAP2K7/MKK7 both activate the JNKs by phosphorylation, but they differ in their preference for the phosphorylation site in the Thr-Pro-Tyr motif. MAP2K4 shows preference for phosphorylation of the Tyr residue and MAP2K7/MKK7 for the Thr residue. The phosphorylation of the Thr residue by MAP2K7/MKK7 seems to be the prerequisite for JNK activation at least in response to pro-inflammatory cytokines, while other stimuli activate both MAP2K4/MKK4 and MAP2K7/MKK7 which synergistically phosphorylate JNKs. MAP2K4 is required for maintaining peripheral lymphoid homeostasis. The MKK/JNK signaling pathway is also involved in mitochondrial death signaling pathway, including the release cytochrome c, leading to apoptosis. Whereas MAP2K7/MKK7 exclusively activates JNKs, MAP2K4/MKK4 additionally activates the p38 MAPKs MAPK11, MAPK12, MAPK13 and MAPK14. The sequence is that of Dual specificity mitogen-activated protein kinase kinase 4 (MAP2K4) from Homo sapiens (Human).